The chain runs to 288 residues: Methyltransferase ucsB (288 aa).

S-adenosyl-L-methionine contacts are provided by residues aspartate 87 and 121 to 122 (DA).

This sequence belongs to the class I-like SAM-binding methyltransferase superfamily.

It participates in mycotoxin biosynthesis. Methyltransferase; part of the gene cluster that mediates the biosynthesis of UCS1025A, a member of the pyrrolizidinone family that acts as a strong telomerase inhibitor and displays potent antibacterial and antitumor properties. These compounds share a hemiaminal-containing pyrrolizidinone core fused with a gamma-lactone, giving a furopyrrolizidine that is connected to a decalin fragment. The polyketide synthase module (PKS) of the PKS-NRPS ucsA is responsible for the synthesis of the polyketide backbone via the condensation of an acetyl-CoA starter unit with 6 malonyl-CoA units. The downstream nonribosomal peptide synthetase (NRPS) module then amidates the carboxyl end of the polyketide with a 2S,3S-methylproline derived from L-isoleucine by the 2-oxoglutarate-dependent dioxygenase ucsF which converts L-isoleucine to (4S,5S)-4-methylpyrroline-5-carboxylate that is further converted to 2S,3S-methylproline by the pyrroline-5-carboxylate reductase ucsG. Reductive release of the completed aminoacyl polyketide from the assembly line can form the 3-pyrrolin-2-one structure via an intramolecular Knoevenagel reaction. Because ucsA lacks a designated enoylreductase (ER) domain, the required activity is provided the enoyl reductase ucsL. This keto acyclic precursor is the substrate of the Diels-Alderase ucsH, that catalyzes the Diels-Alder cycloaddition. Oxidation of the 3S-methyl group to a carboxylate by the cytochrome P450 monooxygenase ucsK allows an oxa-Michael cyclization that might involve the reductase/dehydrogenase ucsI and which furnishes the furopyrrolizidine. The oxidase ucsJ likely plays a critical role in stereoselective reduction of the C5-C6 double bond to afford the required R-configured carboxylate group. Further enolization and oxidation at C5 by an unidentified enzyme affords the last intermediate that can undergo oxa-Michael cyclization to yield UCS1025A. The chain is Methyltransferase ucsB from Acremonium sp.